Here is a 342-residue protein sequence, read N- to C-terminus: N-acetyl-gamma-glutamyl-phosphate reductase (342 aa).

Cys149 is an active-site residue.

It belongs to the NAGSA dehydrogenase family. Type 1 subfamily.

The protein localises to the cytoplasm. It catalyses the reaction N-acetyl-L-glutamate 5-semialdehyde + phosphate + NADP(+) = N-acetyl-L-glutamyl 5-phosphate + NADPH + H(+). The protein operates within amino-acid biosynthesis; L-arginine biosynthesis; N(2)-acetyl-L-ornithine from L-glutamate: step 3/4. Catalyzes the NADPH-dependent reduction of N-acetyl-5-glutamyl phosphate to yield N-acetyl-L-glutamate 5-semialdehyde. This is N-acetyl-gamma-glutamyl-phosphate reductase from Ruegeria pomeroyi (strain ATCC 700808 / DSM 15171 / DSS-3) (Silicibacter pomeroyi).